Consider the following 125-residue polypeptide: Protein ApaG (125 aa).

The ApaG domain occupies 3-125 (TAVTEGIEVT…FPLVVPGSLN (123 aa)).

This is Protein ApaG from Anaeromyxobacter dehalogenans (strain 2CP-C).